Reading from the N-terminus, the 340-residue chain is Formimidoylglutamase (340 aa).

Residues His129, Asp160, His162, Asp164, Asp257, and Asp259 each contribute to the Mn(2+) site.

This sequence belongs to the arginase family. Requires Mn(2+) as cofactor.

It carries out the reaction N-formimidoyl-L-glutamate + H2O = formamide + L-glutamate. Its pathway is amino-acid degradation; L-histidine degradation into L-glutamate; L-glutamate from N-formimidoyl-L-glutamate (hydrolase route): step 1/1. Its function is as follows. Catalyzes the conversion of N-formimidoyl-L-glutamate to L-glutamate and formamide. The polypeptide is Formimidoylglutamase (Vibrio parahaemolyticus serotype O3:K6 (strain RIMD 2210633)).